Here is a 357-residue protein sequence, read N- to C-terminus: Histidinol-phosphate aminotransferase (357 aa).

An N6-(pyridoxal phosphate)lysine modification is found at Lys218.

It belongs to the class-II pyridoxal-phosphate-dependent aminotransferase family. Histidinol-phosphate aminotransferase subfamily. As to quaternary structure, homodimer. It depends on pyridoxal 5'-phosphate as a cofactor.

It catalyses the reaction L-histidinol phosphate + 2-oxoglutarate = 3-(imidazol-4-yl)-2-oxopropyl phosphate + L-glutamate. The protein operates within amino-acid biosynthesis; L-histidine biosynthesis; L-histidine from 5-phospho-alpha-D-ribose 1-diphosphate: step 7/9. The chain is Histidinol-phosphate aminotransferase from Prosthecochloris aestuarii (strain DSM 271 / SK 413).